A 128-amino-acid chain; its full sequence is Aspartate 1-decarboxylase (128 aa).

Serine 25 functions as the Schiff-base intermediate with substrate; via pyruvic acid in the catalytic mechanism. Serine 25 is subject to Pyruvic acid (Ser). Threonine 57 serves as a coordination point for substrate. Tyrosine 58 acts as the Proton donor in catalysis. 73-75 (GAA) provides a ligand contact to substrate.

Belongs to the PanD family. Heterooctamer of four alpha and four beta subunits. Pyruvate is required as a cofactor. Post-translationally, is synthesized initially as an inactive proenzyme, which is activated by self-cleavage at a specific serine bond to produce a beta-subunit with a hydroxyl group at its C-terminus and an alpha-subunit with a pyruvoyl group at its N-terminus.

The protein localises to the cytoplasm. The catalysed reaction is L-aspartate + H(+) = beta-alanine + CO2. It participates in cofactor biosynthesis; (R)-pantothenate biosynthesis; beta-alanine from L-aspartate: step 1/1. In terms of biological role, catalyzes the pyruvoyl-dependent decarboxylation of aspartate to produce beta-alanine. This Staphylococcus epidermidis (strain ATCC 35984 / DSM 28319 / BCRC 17069 / CCUG 31568 / BM 3577 / RP62A) protein is Aspartate 1-decarboxylase.